A 276-amino-acid chain; its full sequence is Energy-coupling factor transporter ATP-binding protein EcfA1 (276 aa).

The ABC transporter domain maps to 2–237; the sequence is IEIKNLKFKY…GSELVDLGLD (236 aa). An ATP-binding site is contributed by 37–44; it reads GHNGSGKS.

Belongs to the ABC transporter superfamily. Energy-coupling factor EcfA family. In terms of assembly, forms a stable energy-coupling factor (ECF) transporter complex composed of 2 membrane-embedded substrate-binding proteins (S component), 2 ATP-binding proteins (A component) and 2 transmembrane proteins (T component).

The protein localises to the cell membrane. In terms of biological role, ATP-binding (A) component of a common energy-coupling factor (ECF) ABC-transporter complex. Unlike classic ABC transporters this ECF transporter provides the energy necessary to transport a number of different substrates. The polypeptide is Energy-coupling factor transporter ATP-binding protein EcfA1 (Streptococcus thermophilus (strain ATCC BAA-491 / LMD-9)).